The sequence spans 171 residues: O-acetyl-ADP-ribose deacetylase 1 (171 aa).

A Macro domain is found at 1–171 (MKKITVIQGD…NYDLYLKLLN (171 aa)). Residues 10-11 (DI), N24, 32-34 (GVD), and 121-125 (STGIY) each bind substrate. The Proton acceptor role is filled by D34.

It belongs to the MacroD-type family. YmdB subfamily. Homodimer. Interacts with RNase III.

It catalyses the reaction 3''-O-acetyl-ADP-D-ribose + H2O = ADP-D-ribose + acetate + H(+). The enzyme catalyses 2''-O-acetyl-ADP-D-ribose + H2O = ADP-D-ribose + acetate + H(+). Deacetylates O-acetyl-ADP ribose to yield ADP-ribose and free acetate. Down-regulates ribonuclease 3 (RNase III) activity. Acts by interacting directly with the region of the ribonuclease that is required for dimerization/activation. The chain is O-acetyl-ADP-ribose deacetylase 1 from Pantoea vagans (strain C9-1) (Pantoea agglomerans (strain C9-1)).